The primary structure comprises 86 residues: Small ribosomal subunit protein uS17 (86 aa).

This sequence belongs to the universal ribosomal protein uS17 family. Part of the 30S ribosomal subunit.

One of the primary rRNA binding proteins, it binds specifically to the 5'-end of 16S ribosomal RNA. The chain is Small ribosomal subunit protein uS17 from Tropheryma whipplei (strain TW08/27) (Whipple's bacillus).